The primary structure comprises 949 residues: Glutamate receptor ionotropic, kainate 1 (949 aa).

The signal sequence occupies residues 1-30 (MERSTVLIQPGLWTRDTSWTLLYFLCYILP). Residues 31-576 (QTSPQVLRIG…VFSFLNPLSP (546 aa)) lie on the Extracellular side of the membrane. Residues Asn68, Asn74, Asn276, Asn379, Asn428, Asn439, and Asn446 are each glycosylated (N-linked (GlcNAc...) asparagine). Pro531, Thr533, and Arg538 together coordinate L-glutamate. Asn561 carries an N-linked (GlcNAc...) asparagine glycan. The helical transmembrane segment at 577-597 (DIWMYVLLACLGVSCVLFVIA) threads the bilayer. Topologically, residues 598–653 (RFTPYEWYNPHPCNPDSDVVENNFTLLNSFWFGVGALMQQGSELMPKALSTRIVGG) are cytoplasmic. Residues 654 to 674 (IWWFFTLIIISSYTANLAAFL) form a helical membrane-spanning segment. Residues 675–834 (TVERMESPID…KEASALGVEN (160 aa)) are Extracellular-facing. Positions 704 and 705 each coordinate L-glutamate. At Ser725 the chain carries Phosphoserine; by PKC. Residue Glu753 participates in L-glutamate binding. A Phosphothreonine; by PKC modification is found at Thr761. The cysteines at positions 765 and 819 are disulfide-linked. The N-linked (GlcNAc...) asparagine glycan is linked to Asn766. Residues 835-855 (IGGIFIVLAAGLVLSVFVAIG) form a helical membrane-spanning segment. At 856–949 (EFLYKSRKNN…RRTQRKETVA (94 aa)) the chain is on the cytoplasmic side.

It belongs to the glutamate-gated ion channel (TC 1.A.10.1) family. GRIK1 subfamily. As to quaternary structure, homotetramer or heterotetramer of pore-forming glutamate receptor subunits. Tetramers may be formed by the dimerization of dimers. Can form functional heteromeric receptors with GRIK4 and GRIK5. Interacts with KLHL17. As to expression, expressed in the olfactory bulb (at protein level). Expressed in subsets of neurons throughout the developing and adult central and peripheral nervous systems. In the CNS principally in the medial amygdaloid nuclei, medial habenulae, pyriform and cingulate cortices, and Purkinje cell layer. Also highly expressed in embryonic and adult dorsal root ganglia. Expressed at high levels in the trigeminal ganglion neurons.

It localises to the cell membrane. It is found in the postsynaptic cell membrane. The enzyme catalyses Ca(2+)(in) = Ca(2+)(out). In terms of biological role, ionotropic glutamate receptor that functions as a cation-permeable ligand-gated ion channel, gated by L-glutamate and the glutamatergic agonist kainic acid. L-glutamate acts as an excitatory neurotransmitter at many synapses in the central nervous system. Binding of the excitatory neurotransmitter L-glutamate induces a conformation change, leading to the opening of the cation channel, and thereby converts the chemical signal to an electrical impulse. The receptor then desensitizes rapidly and enters a transient inactive state, characterized by the presence of bound agonist. The polypeptide is Glutamate receptor ionotropic, kainate 1 (Grik1) (Rattus norvegicus (Rat)).